The chain runs to 319 residues: Transcription initiation factor IIB 6 (319 aa).

Over residues 1–16 (MTDARMRSREQERTDE) the composition is skewed to basic and acidic residues. Positions 1-33 (MTDARMRSREQERTDETESESTDGCPECGGLVV) are disordered. The TFIIB-type zinc-finger motif lies at 21-51 (STDGCPECGGLVVNDEEHGESVCADCGLVVE). Positions 25, 28, 43, and 46 each coordinate Zn(2+). Over residues 59–74 (PEWRAFDSKEKDEKSR) the composition is skewed to basic and acidic residues. The segment at 59–89 (PEWRAFDSKEKDEKSRVGAPTTNTMHDKGLS) is disordered. 2 tandem repeats follow at residues 137–220 (GEID…VREL) and 231–312 (SYVP…ELLE).

It belongs to the TFIIB family.

Functionally, stabilizes TBP binding to an archaeal box-A promoter. Also responsible for recruiting RNA polymerase II to the pre-initiation complex (DNA-TBP-TFIIB). The chain is Transcription initiation factor IIB 6 from Halobacterium salinarum (strain ATCC 700922 / JCM 11081 / NRC-1) (Halobacterium halobium).